The chain runs to 174 residues: ATP-dependent protease subunit HslV (174 aa).

Threonine 2 is an active-site residue. Positions 157, 160, and 163 each coordinate Na(+).

It belongs to the peptidase T1B family. HslV subfamily. In terms of assembly, a double ring-shaped homohexamer of HslV is capped on each side by a ring-shaped HslU homohexamer. The assembly of the HslU/HslV complex is dependent on binding of ATP.

It localises to the cytoplasm. The catalysed reaction is ATP-dependent cleavage of peptide bonds with broad specificity.. With respect to regulation, allosterically activated by HslU binding. Functionally, protease subunit of a proteasome-like degradation complex believed to be a general protein degrading machinery. This chain is ATP-dependent protease subunit HslV, found in Shewanella sediminis (strain HAW-EB3).